A 217-amino-acid polypeptide reads, in one-letter code: Protein TNT (217 aa).

A disordered region spans residues 1 to 217 (MSLVPGQHCS…HSTKQTGGKE (217 aa)). Composition is skewed to polar residues over residues 20-36 (SPIT…TEFS) and 45-61 (TSPQ…SQGP). Low complexity-rich tracts occupy residues 91–104 (EPSL…LQSP) and 128–139 (QSSESHVSSVQH). 2 stretches are compositionally biased toward polar residues: residues 177-191 (RLNT…SQLG) and 207-217 (AHSTKQTGGKE).

In terms of tissue distribution, preferentially expressed in teratocarcinoma rather than in normal testis.

This Homo sapiens (Human) protein is Protein TNT (C16orf82).